The sequence spans 86 residues: U15-lycotoxin-Ls1d (86 aa).

An N-terminal signal peptide occupies residues 1–20; sequence MNSKIFAVLLLLGLLSCVLS. Residues 21-66 enclose the WAP domain; that stretch reads DQYCPKSSITACKKMNIRNDCCKDDDCTGGSWCCATPCGNFCKYPT. 5 cysteine pairs are disulfide-bonded: cysteine 24–cysteine 54, cysteine 32–cysteine 58, cysteine 41–cysteine 53, cysteine 42–cysteine 80, and cysteine 47–cysteine 62.

The protein belongs to the venom protein 11 family. 01 (wap-1) subfamily. In terms of processing, contains 5 disulfide bonds. As to expression, expressed by the venom gland.

It is found in the secreted. Its function is as follows. Has antibacterial activity. The chain is U15-lycotoxin-Ls1d from Lycosa singoriensis (Wolf spider).